We begin with the raw amino-acid sequence, 116 residues long: Large ribosomal subunit protein bL19 (116 aa).

It belongs to the bacterial ribosomal protein bL19 family.

This protein is located at the 30S-50S ribosomal subunit interface and may play a role in the structure and function of the aminoacyl-tRNA binding site. In Streptomyces lividans, this protein is Large ribosomal subunit protein bL19 (rplS).